Consider the following 124-residue polypeptide: Holo-[acyl-carrier-protein] synthase (124 aa).

Mg(2+) contacts are provided by D8 and E56.

It belongs to the P-Pant transferase superfamily. AcpS family. Mg(2+) is required as a cofactor.

Its subcellular location is the cytoplasm. It carries out the reaction apo-[ACP] + CoA = holo-[ACP] + adenosine 3',5'-bisphosphate + H(+). Its function is as follows. Transfers the 4'-phosphopantetheine moiety from coenzyme A to a Ser of acyl-carrier-protein. This Nitratidesulfovibrio vulgaris (strain DP4) (Desulfovibrio vulgaris) protein is Holo-[acyl-carrier-protein] synthase.